We begin with the raw amino-acid sequence, 110 residues long: UPF0060 membrane protein Francci3_2786 (110 aa).

4 consecutive transmembrane segments (helical) span residues 8–28 (LLFV…WQGV), 33–53 (GPVW…VATL), 62–82 (ILAA…VAVD), and 87–107 (DRYD…IMYA).

It belongs to the UPF0060 family.

The protein resides in the cell membrane. The protein is UPF0060 membrane protein Francci3_2786 of Frankia casuarinae (strain DSM 45818 / CECT 9043 / HFP020203 / CcI3).